Here is a 991-residue protein sequence, read N- to C-terminus: Adhesion G-protein coupled receptor F3 (991 aa).

The first 20 residues, 1–20 (MSSLALSQLLLAVTLPLLEL), serve as a signal peptide directing secretion. Residues 21–694 (EPTFVPTAQS…ENPTLDLLSQ (674 aa)) are Extracellular-facing. N-linked (GlcNAc...) asparagine glycans are attached at residues Asn-75, Asn-102, Asn-118, Asn-321, Asn-362, Asn-484, Asn-571, Asn-589, Asn-630, and Asn-660. The GAIN-B domain occupies 519–684 (HPFSFSSANV…SILMSQHTVP (166 aa)). 2 disulfides stabilise this stretch: Cys-635/Cys-666 and Cys-654/Cys-668. The interval 635–684 (CVFWDHRVFQGQGGWSDEGCEVHAANASITQCICQHLTAFSILMSQHTVP) is GPS. The chain crosses the membrane as a helical span at residues 695-715 (VGTGASVLALLVCLAIYGLVW). At 716–730 (RVVVRNKVAFFRHTT) the chain is on the cytoplasmic side. The chain crosses the membrane as a helical span at residues 731–751 (LFNMVICLLVADTCFLGSPFL). Over 752–757 (PSGYHS) the chain is Extracellular. The helical transmembrane segment at 758–778 (LICLVTAFLCHFFYLATFFWM) threads the bilayer. The Cytoplasmic segment spans residues 779 to 799 (LAQALVLAHQLLFVFHQLSKH). A helical transmembrane segment spans residues 800 to 820 (VVLSLMVMLGYLCPLGFAGVT). At 821-850 (LGLYLPQRKYLWEGKCFLNGGGVMLYSFSE) the chain is on the extracellular side. The chain crosses the membrane as a helical span at residues 851-871 (PVLAIVGVNGLVLVIAVLKLL). The Cytoplasmic portion of the chain corresponds to 872-892 (RPSLSEGPTVEKRQALVGVLK). A helical transmembrane segment spans residues 893–913 (ALLILTPIFGLTWGLGVATLF). At 914 to 916 (DGS) the chain is on the extracellular side. The chain crosses the membrane as a helical span at residues 917–937 (IVSHYAFSILNSLQGVFILVF). The Cytoplasmic portion of the chain corresponds to 938 to 991 (GCLTDKKVLEALRKRLRGSRSSNSAISMVTNETYTSEHSKERSEPASYEERMTD). The interval 964–991 (SMVTNETYTSEHSKERSEPASYEERMTD) is disordered. The span at 972–991 (TSEHSKERSEPASYEERMTD) shows a compositional bias: basic and acidic residues.

Belongs to the G-protein coupled receptor 2 family. Adhesion G-protein coupled receptor (ADGR) subfamily. In terms of assembly, heterodimer of 2 chains generated by proteolytic processing; the large extracellular N-terminal fragment and the membrane-bound C-terminal fragment predominantly remain associated and non-covalently linked. Autoproteolytically processed at the GPS region of the GAIN-B domain; this cleavage modulates receptor activity. Expression is restricted to testis and circumvallate papillae.

The protein localises to the membrane. Orphan receptor. This Mus musculus (Mouse) protein is Adhesion G-protein coupled receptor F3 (ADGRF3).